The primary structure comprises 223 residues: Deoxyribose-phosphate aldolase 2 (223 aa).

Asp-89 functions as the Proton donor/acceptor in the catalytic mechanism. The Schiff-base intermediate with acetaldehyde role is filled by Lys-152. Catalysis depends on Lys-181, which acts as the Proton donor/acceptor.

The protein belongs to the DeoC/FbaB aldolase family. DeoC type 1 subfamily.

The protein localises to the cytoplasm. The enzyme catalyses 2-deoxy-D-ribose 5-phosphate = D-glyceraldehyde 3-phosphate + acetaldehyde. It participates in carbohydrate degradation; 2-deoxy-D-ribose 1-phosphate degradation; D-glyceraldehyde 3-phosphate and acetaldehyde from 2-deoxy-alpha-D-ribose 1-phosphate: step 2/2. In terms of biological role, catalyzes a reversible aldol reaction between acetaldehyde and D-glyceraldehyde 3-phosphate to generate 2-deoxy-D-ribose 5-phosphate. This Bacillus licheniformis (strain ATCC 14580 / DSM 13 / JCM 2505 / CCUG 7422 / NBRC 12200 / NCIMB 9375 / NCTC 10341 / NRRL NRS-1264 / Gibson 46) protein is Deoxyribose-phosphate aldolase 2.